A 356-amino-acid chain; its full sequence is uncharacterized protein (356 aa).

Helical transmembrane passes span 258–275 (SALQAAAAVIEFVAVFYY), 290–312 (PHWLSFSLLAAFTFTVVVYTEAL), and 325–347 (LVLLTLTLAILVILMATLPTLFS).

The protein resides in the cell membrane. This is an uncharacterized protein from Archaeoglobus fulgidus (strain ATCC 49558 / DSM 4304 / JCM 9628 / NBRC 100126 / VC-16).